The following is a 1184-amino-acid chain: Non-receptor tyrosine-protein kinase TYK2 (1184 aa).

The FERM domain maps to 33-430; the sequence is LMVLLHWPGP…GYFRLTADSS (398 aa). The disordered stretch occupies residues 294 to 368; sequence CYIQNSGQTA…KAGEHLTESP (75 aa). Y295 carries the phosphotyrosine modification. The SH2; atypical domain maps to 449-529; the sequence is GIHGPLMDPF…GRSFASLGDL (81 aa). S525 is modified (phosphoserine). A Protein kinase 1 domain is found at 589–866; sequence ITQLSHLGQG…RTILRDLTRL (278 aa). A Phosphotyrosine modification is found at Y604. S881 is modified (phosphoserine). The region spanning 894–1166 is the Protein kinase 2 domain; the sequence is LKKIRDLGEG…PTFQNLVPIL (273 aa). Residues 900–908 and K927 contribute to the ATP site; that span reads LGEGHFGKV. The active-site Proton acceptor is the D1020. Y1051 is subject to Phosphotyrosine; by autocatalysis. A Phosphotyrosine modification is found at Y1052.

This sequence belongs to the protein kinase superfamily. Tyr protein kinase family. JAK subfamily. As to quaternary structure, interacts (via FERM domain) with JAKMIP1. Interacts with PIK3R1; this interaction is important for cell migration. Interacts with MPL/TPOR. Phosphorylation by JAK1 at Tyr-1051 and Tyr-1052 induces kinase activation.

The enzyme catalyses L-tyrosyl-[protein] + ATP = O-phospho-L-tyrosyl-[protein] + ADP + H(+). The protein kinase 1 domain (also termed pseudokinase domain) mediates autoinhibition of the TYK2 kinase domain. In terms of biological role, tyrosine kinase of the non-receptor type involved in numerous cytokines and interferons signaling, which regulates cell growth, development, cell migration, innate and adaptive immunity. Plays both structural and catalytic roles in numerous interleukins and interferons (IFN-alpha/beta) signaling. Associates with heterodimeric cytokine receptor complexes and activates STAT family members including STAT1, STAT3, STAT4 or STAT6. The heterodimeric cytokine receptor complexes are composed of (1) a TYK2-associated receptor chain (IFNAR1, IL12RB1, IL10RB or IL13RA1), and (2) a second receptor chain associated either with JAK1 or JAK2. In response to cytokine-binding to receptors, phosphorylates and activates receptors (IFNAR1, IL12RB1, IL10RB or IL13RA1), creating docking sites for STAT members. In turn, recruited STATs are phosphorylated by TYK2 (or JAK1/JAK2 on the second receptor chain), form homo- and heterodimers, translocate to the nucleus, and regulate cytokine/growth factor responsive genes. Negatively regulates STAT3 activity by promototing phosphorylation at a specific tyrosine that differs from the site used for signaling. The chain is Non-receptor tyrosine-protein kinase TYK2 from Mus musculus (Mouse).